Consider the following 386-residue polypeptide: MKKLAILGSTGSIGVSTLDIVAAHPDKFQVVALTAGGNLDLLKKQIEEFSPQLVAVLNEELAQKLQQMLSGKGPAILHGVEGMIAAATAADADMVVAAIVGAAGLVPTAAAIKAGKDIALANKETLVTAGRLIMDMVKAHGVKLYPVDSEHSAVFQSLQGHRMEDVKQIILTASGGPFFTWPAEKLAQVTVSDALNHPNWSMGQKITIDSASMMNKGLEVIEARWLFDIPAEKIAVNIHPQSIIHSMVEYIDGCVMAQLGIPDMKAPIAYALTYPGRVPTGVKPLDLTALSGLTFFNPDYSRFPALKLAYRALEDGESMPTVMNAANEVAVGAFLNGRIKFTAIAEAIEKTMDFHQPHLLNTIEEVLLVDRWGREKCKELLGIDKQ.

NADPH-binding residues include Thr-10, Gly-11, Ser-12, Ile-13, Gly-36, Asn-38, and Asn-122. Lys-123 contacts 1-deoxy-D-xylulose 5-phosphate. Glu-124 is an NADPH binding site. Asp-148 is a Mn(2+) binding site. 1-deoxy-D-xylulose 5-phosphate contacts are provided by Ser-149, Glu-150, Ser-174, and His-197. Glu-150 contributes to the Mn(2+) binding site. Gly-203 contributes to the NADPH binding site. 4 residues coordinate 1-deoxy-D-xylulose 5-phosphate: Ser-210, Asn-215, Lys-216, and Glu-219. Glu-219 contributes to the Mn(2+) binding site.

It belongs to the DXR family. Mg(2+) serves as cofactor. Mn(2+) is required as a cofactor.

It carries out the reaction 2-C-methyl-D-erythritol 4-phosphate + NADP(+) = 1-deoxy-D-xylulose 5-phosphate + NADPH + H(+). It functions in the pathway isoprenoid biosynthesis; isopentenyl diphosphate biosynthesis via DXP pathway; isopentenyl diphosphate from 1-deoxy-D-xylulose 5-phosphate: step 1/6. Its function is as follows. Catalyzes the NADPH-dependent rearrangement and reduction of 1-deoxy-D-xylulose-5-phosphate (DXP) to 2-C-methyl-D-erythritol 4-phosphate (MEP). This chain is 1-deoxy-D-xylulose 5-phosphate reductoisomerase, found in Geotalea uraniireducens (strain Rf4) (Geobacter uraniireducens).